The following is a 235-amino-acid chain: Serine protease SplA (235 aa).

Residues 1-35 form the signal peptide; that stretch reads MNKNVMVKGLTALTILTSLGFAENISNQPHSIAKA. Active-site charge relay system residues include histidine 74, aspartate 113, and serine 189.

Belongs to the peptidase S1B family.

The protein localises to the secreted. The polypeptide is Serine protease SplA (splA) (Staphylococcus aureus (strain Mu3 / ATCC 700698)).